Reading from the N-terminus, the 129-residue chain is Small ribosomal subunit protein uS11 (129 aa).

This sequence belongs to the universal ribosomal protein uS11 family. In terms of assembly, part of the 30S ribosomal subunit. Interacts with proteins S7 and S18. Binds to IF-3.

Located on the platform of the 30S subunit, it bridges several disparate RNA helices of the 16S rRNA. Forms part of the Shine-Dalgarno cleft in the 70S ribosome. In Psychrobacter arcticus (strain DSM 17307 / VKM B-2377 / 273-4), this protein is Small ribosomal subunit protein uS11.